Here is a 488-residue protein sequence, read N- to C-terminus: UDP-N-acetylmuramoyl-L-alanyl-D-glutamate--2,6-diaminopimelate ligase (488 aa).

UDP-N-acetyl-alpha-D-muramoyl-L-alanyl-D-glutamate contacts are provided by residues leucine 24, serine 26, and 41-43 (HQV). Residue 113–119 (GTNGKTT) participates in ATP binding. UDP-N-acetyl-alpha-D-muramoyl-L-alanyl-D-glutamate contacts are provided by residues asparagine 154, 155 to 156 (TT), serine 182, glutamine 188, and arginine 190. Lysine 222 is subject to N6-carboxylysine. Residues arginine 386, 410–413 (DNPR), glycine 461, and glutamate 465 contribute to the meso-2,6-diaminopimelate site. A Meso-diaminopimelate recognition motif motif is present at residues 410 to 413 (DNPR).

This sequence belongs to the MurCDEF family. MurE subfamily. Mg(2+) serves as cofactor. Post-translationally, carboxylation is probably crucial for Mg(2+) binding and, consequently, for the gamma-phosphate positioning of ATP.

Its subcellular location is the cytoplasm. The catalysed reaction is UDP-N-acetyl-alpha-D-muramoyl-L-alanyl-D-glutamate + meso-2,6-diaminopimelate + ATP = UDP-N-acetyl-alpha-D-muramoyl-L-alanyl-gamma-D-glutamyl-meso-2,6-diaminopimelate + ADP + phosphate + H(+). It participates in cell wall biogenesis; peptidoglycan biosynthesis. Functionally, catalyzes the addition of meso-diaminopimelic acid to the nucleotide precursor UDP-N-acetylmuramoyl-L-alanyl-D-glutamate (UMAG) in the biosynthesis of bacterial cell-wall peptidoglycan. The chain is UDP-N-acetylmuramoyl-L-alanyl-D-glutamate--2,6-diaminopimelate ligase from Haemophilus influenzae (strain 86-028NP).